A 354-amino-acid polypeptide reads, in one-letter code: tRNA-specific 2-thiouridylase MnmA (354 aa).

Residues alanine 7 to serine 14 and methionine 33 contribute to the ATP site. Cysteine 94 acts as the Nucleophile in catalysis. Cysteine 94 and cysteine 192 are disulfide-bonded. Residue glycine 118 participates in ATP binding. The tract at residues lysine 141–glutamine 143 is interaction with tRNA. Cysteine 192 acts as the Cysteine persulfide intermediate in catalysis. Residues arginine 296–tyrosine 297 form an interaction with tRNA region.

This sequence belongs to the MnmA/TRMU family.

The protein localises to the cytoplasm. The catalysed reaction is S-sulfanyl-L-cysteinyl-[protein] + uridine(34) in tRNA + AH2 + ATP = 2-thiouridine(34) in tRNA + L-cysteinyl-[protein] + A + AMP + diphosphate + H(+). Its function is as follows. Catalyzes the 2-thiolation of uridine at the wobble position (U34) of tRNA, leading to the formation of s(2)U34. This chain is tRNA-specific 2-thiouridylase MnmA, found in Trichlorobacter lovleyi (strain ATCC BAA-1151 / DSM 17278 / SZ) (Geobacter lovleyi).